Here is a 245-residue protein sequence, read N- to C-terminus: Brasilane terpene glycosides biosynthesis cluster protein D (245 aa).

2 C3H1-type zinc fingers span residues 121–152 (KELK…HDNV) and 161–185 (ICHF…HYPA). The tract at residues 186–245 (PHRVTAPMPSKKKSKKLRSSVADDASHPDLGKARRHDPRDDEQNDEVWRNQGRARPGQEW) is disordered. The span at 209 to 226 (DASHPDLGKARRHDPRDD) shows a compositional bias: basic and acidic residues.

Functionally, part of the gene cluster that mediates the biosynthesis of the brasilane terpene glycosides brasilane D and E. The biosynthesis starts with the activity of the terpene cyclase braA that converts farnesyl pyrophosphate into the sesquiterpene alcohol trichobrasilenol. Subsequently, trichobrasilenol is glycosylated by the O-glycosyltransferase braB putatively using UDP-GlcNAc as sugar donor to yield brasilane A. The latter then undergoes two rounds of oxidation performed by the cytochrome P450 monooxygenase braC. In the first round braC hydroxylates C-12 forming brasilane D, which serves as substrate in the second round to establish the epoxide at the bond between C-5 and C-10 and oxidize the alcohol at C-12 to an aldehyde leading to the final product brasilane E. The polypeptide is Brasilane terpene glycosides biosynthesis cluster protein D (Annulohypoxylon truncatum (Hypoxylon truncatum)).